The primary structure comprises 158 residues: Endoribonuclease YbeY (158 aa).

The Zn(2+) site is built by His117, His121, and His127.

Belongs to the endoribonuclease YbeY family. It depends on Zn(2+) as a cofactor.

It is found in the cytoplasm. Single strand-specific metallo-endoribonuclease involved in late-stage 70S ribosome quality control and in maturation of the 3' terminus of the 16S rRNA. This chain is Endoribonuclease YbeY, found in Francisella philomiragia subsp. philomiragia (strain ATCC 25017 / CCUG 19701 / FSC 153 / O#319-036).